A 1505-amino-acid polypeptide reads, in one-letter code: Probable serine/threonine-protein kinase DDB_G0280133 (1505 aa).

3 PAS domains span residues 2 to 72, 108 to 178, and 215 to 284; these read NTHN…FETG, RMFI…YHGG, and DMFK…TDSH. Disordered regions lie at residues 282–348 and 398–533; these read DSHD…FNHS and RVYG…ESSY. 2 stretches are compositionally biased toward low complexity: residues 289 to 314 and 328 to 344; these read QQQQ…TTST and SSPP…TPTT. 2 stretches are compositionally biased toward basic and acidic residues: residues 398–407 and 415–430; these read RVYGKDKDKN and ENKD…ESKE. The span at 431-443 shows a compositional bias: basic residues; the sequence is HRHSKEKKKRKKD. Residues 448-468 are compositionally biased toward low complexity; that stretch reads NNNNNNNNNNNNNNEQTSDSS. Positions 479-489 are enriched in basic residues; it reads SKKKRSSKKKS. Residues 515–532 are compositionally biased toward low complexity; it reads SSNSSSNSSHSNAPHESS. Residues 542-805 form the Protein kinase domain; sequence YTLGKTLGRG…IMNVLNHPWL (264 aa). ATP contacts are provided by residues 548 to 556 and Lys571; that span reads LGRGNYGVV. Asp684 functions as the Proton acceptor in the catalytic mechanism. Positions 855 to 960 are enriched in low complexity; it reads NILNNNNNNN…NNTNSIINNN (106 aa). Disordered regions lie at residues 855-1048, 1072-1091, and 1181-1358; these read NILN…SHQQ, QPNQ…QLQQ, and QQQQ…DEEN. The stretch at 903-939 forms a coiled coil; it reads NNNNNINNNINNNNNVNNNVNNNKNNNNNNNNNSNNN. The span at 961-974 shows a compositional bias: polar residues; sequence LYNQSLSPQNNNIY. Low complexity-rich tracts occupy residues 975–1013 and 1022–1048; these read QHSP…QQQH and QQHQ…SHQQ. Polar residues predominate over residues 1072–1082; sequence QPNQQVSFDTN. Residues 1125 to 1189 are a coiled coil; sequence IQQIQQLQQQ…QQQQQQQQND (65 aa). Basic and acidic residues predominate over residues 1202–1271; sequence SKRDNSYNKR…NSRDNNRYNN (70 aa). Positions 1272-1282 are enriched in low complexity; it reads RDNNNNNNSNN. Composition is skewed to basic and acidic residues over residues 1283 to 1301 and 1313 to 1326; these read NRER…DYGK and NKDK…KPDF. Positions 1331–1347 are enriched in polar residues; the sequence is SLKNDSSSNYGTISSGR. The 65-residue stretch at 1399–1463 folds into the FHA domain; sequence FLFGRNRDIA…NGTFLKGEKI (65 aa).

It belongs to the protein kinase superfamily. CAMK Ser/Thr protein kinase family. SNF1 subfamily.

It catalyses the reaction L-seryl-[protein] + ATP = O-phospho-L-seryl-[protein] + ADP + H(+). The catalysed reaction is L-threonyl-[protein] + ATP = O-phospho-L-threonyl-[protein] + ADP + H(+). This Dictyostelium discoideum (Social amoeba) protein is Probable serine/threonine-protein kinase DDB_G0280133.